A 382-amino-acid chain; its full sequence is Inactive anthranilate O-methyltransferase 1 (382 aa).

Residues Tyr-20, Cys-61, Asn-66, Asp-102, Leu-103, Ser-146, and Tyr-147 each contribute to the S-adenosyl-L-homocysteine site. Mg(2+) is bound by residues Glu-268 and Phe-270.

It belongs to the methyltransferase superfamily. Type-7 methyltransferase family. SABATH subfamily.

The protein is Inactive anthranilate O-methyltransferase 1 (AAMT1I) of Zea mays (Maize).